Consider the following 194-residue polypeptide: HTH-type transcriptional regulator BetI (194 aa).

The 61-residue stretch at P8–L68 folds into the HTH tetR-type domain. Positions T31–F50 form a DNA-binding region, H-T-H motif.

It participates in amine and polyamine biosynthesis; betaine biosynthesis via choline pathway [regulation]. Functionally, repressor involved in the biosynthesis of the osmoprotectant glycine betaine. It represses transcription of the choline transporter BetT and the genes of BetAB involved in the synthesis of glycine betaine. This is HTH-type transcriptional regulator BetI from Brucella anthropi (strain ATCC 49188 / DSM 6882 / CCUG 24695 / JCM 21032 / LMG 3331 / NBRC 15819 / NCTC 12168 / Alc 37) (Ochrobactrum anthropi).